The primary structure comprises 405 residues: Indoleamine 2,3-dioxygenase acdA (405 aa).

Heme is bound at residue His-312.

This sequence belongs to the indoleamine 2,3-dioxygenase family. Heme is required as a cofactor.

It carries out the reaction L-tryptophan + O2 = N-formyl-L-kynurenine. The protein operates within secondary metabolite biosynthesis. Its function is as follows. Indoleamine 2,3-dioxygenase; part of the gene cluster that mediates the biosynthesis of aspcandine, a pyrrolobenzazepine alkaloid. Initially, the indoleamine 2,3-dioxygenase acdA accepts L-tryptophan and performs the oxidative opening of the indole ring to yield N'-formyl-L-kynurenine, which undergoes the spontaneous deformylation reaction to provide L-kynurenine. The kynurenine 3-monooxygenase acdD then hydroxylates L-kynurenine to afford 3-hydroxy-L-kynurenine. 3-hydroxy-L-kynurenine is activated by the A domain of the NRPS-PKS acdB and subsequently loaded onto the enzyme. The KS domain conducts the decarboxylative condensation of the 3-hydroxy-L-kynurenyl and malonyl moieties, and subsequent nucleophilic attacks by the two amino groups would occur nonenzymatically at two distinct positions, achieving the chain release and the construction of the tricyclic system. Finally, a dehydration reaction completes the biosynthesis to yield aspcandine. The chain is Indoleamine 2,3-dioxygenase acdA from Aspergillus candidus.